The sequence spans 716 residues: Calpain clp-4 (716 aa).

The interval 31–53 (DDDDKQEAPVAVSKAPKGKGSNH) is disordered. In terms of domain architecture, Calpain catalytic spans 240–536 (LFEDPEFPAT…FTQMEVCNLT (297 aa)). Active-site residues include C295, H452, and N476.

Belongs to the peptidase C2 family.

Calcium-regulated non-lysosomal thiol-protease which catalyzes limited proteolysis of substrates. Promotes starvation-induced muscle atrophy. This is Calpain clp-4 from Caenorhabditis elegans.